Here is a 429-residue protein sequence, read N- to C-terminus: Glutamate-1-semialdehyde 2,1-aminomutase 1 (429 aa).

Residue lysine 267 is modified to N6-(pyridoxal phosphate)lysine.

The protein belongs to the class-III pyridoxal-phosphate-dependent aminotransferase family. HemL subfamily. Homodimer. Pyridoxal 5'-phosphate is required as a cofactor.

The protein localises to the cytoplasm. The catalysed reaction is (S)-4-amino-5-oxopentanoate = 5-aminolevulinate. Its pathway is porphyrin-containing compound metabolism; protoporphyrin-IX biosynthesis; 5-aminolevulinate from L-glutamyl-tRNA(Glu): step 2/2. This chain is Glutamate-1-semialdehyde 2,1-aminomutase 1, found in Staphylococcus carnosus (strain TM300).